The sequence spans 220 residues: Adenylate kinase (220 aa).

12–17 provides a ligand contact to ATP; it reads GAGKGT. Positions 32–62 are NMP; it reads STGDIFRDIVKKENDELGKKIKEIMERGELV. Residues T33, R38, 60–62, 88–91, and Q95 each bind AMP; these read ELV and GYPR. Residues 129–166 form an LID region; the sequence is ARRICPKCGRIYNLISLPPKEDELCDDCKVKLVQREDD. R130 is an ATP binding site. Zn(2+) is bound by residues C133 and C136. 139–140 is a binding site for ATP; that stretch reads IY. Positions 153 and 156 each coordinate Zn(2+). Positions 163 and 174 each coordinate AMP. ATP is bound at residue I202.

The protein belongs to the adenylate kinase family. As to quaternary structure, monomer.

It is found in the cytoplasm. The enzyme catalyses AMP + ATP = 2 ADP. Its pathway is purine metabolism; AMP biosynthesis via salvage pathway; AMP from ADP: step 1/1. Catalyzes the reversible transfer of the terminal phosphate group between ATP and AMP. Plays an important role in cellular energy homeostasis and in adenine nucleotide metabolism. The chain is Adenylate kinase from Thermotoga petrophila (strain ATCC BAA-488 / DSM 13995 / JCM 10881 / RKU-1).